A 303-amino-acid chain; its full sequence is Mitochondrial carrier homolog 2 (303 aa).

Alanine 2 is modified (N-acetylalanine). Residues 2–15 (ADAASQVLLGSGLT) are Mitochondrial intermembrane-facing. Solcar repeat units lie at residues 2–98 (ADAA…YQES) and 118–206 (DHVI…VNTY). A helical transmembrane segment spans residues 16–36 (ILSQPLMYVKVLIQVGYEPLP). The Cytoplasmic segment spans residues 37 to 77 (PTIGRNIFGRQVCQLPGLFSYAQHIASIDGRRGLFTGLTPR). Residues 78-92 (LCSGVLGTVVHGKVL) form a helical membrane-spanning segment. At 93–135 (QHYQESDKGEELGPGNVQKEVSSSFDHVIKETTREMIARSAAT) the chain is on the mitochondrial intermembrane side. A helical membrane pass occupies residues 136 to 156 (LITHPFHVITLRSMVQFIGRE). Residues 157-180 (SKYCGLCDSIITIYREEGILGFFA) are Cytoplasmic-facing. Residues 181-199 (GLVPRLLGDILSLWLCNSL) traverse the membrane as a helical segment. Residues 200 to 231 (AYLVNTYALDSGVSTMNEMKSYSQAVTGFFAS) are Mitochondrial intermembrane-facing. Residues 232-252 (MLTYPFVLVSNLMAVNNCGLA) form a helical membrane-spanning segment. Over 253–280 (GGCPPYSPIYTSWIDCWCMLQKEGNMSR) the chain is Cytoplasmic. The chain crosses the membrane as a helical span at residues 281–303 (GNSLFFRKVPFGKTYCCDLKMLI).

Belongs to the mitochondrial carrier (TC 2.A.29) family. Interacts with p15BID.

It is found in the mitochondrion outer membrane. In terms of biological role, protein insertase that mediates insertion of transmembrane proteins into the mitochondrial outer membrane. Catalyzes insertion of proteins with alpha-helical transmembrane regions, such as signal-anchored, tail-anchored and multi-pass membrane proteins. Does not mediate insertion of beta-barrel transmembrane proteins. Also acts as a receptor for the truncated form of pro-apoptotic BH3-interacting domain death agonist (p15 BID) and has therefore a critical function in apoptosis. Regulates the quiescence/cycling of hematopoietic stem cells (HSCs). Acts as a regulator of mitochondrial fusion, essential for the naive-to-primed interconversion of embryonic stem cells (ESCs). Acts as a regulator of lipid homeostasis and has a regulatory role in adipocyte differentiation and biology. This is Mitochondrial carrier homolog 2 from Homo sapiens (Human).